Here is a 665-residue protein sequence, read N- to C-terminus: DNA ligase (665 aa).

Residues 31 to 35, 80 to 81, and Glu-111 each bind NAD(+); these read DEEFD and SL. Residue Lys-113 is the N6-AMP-lysine intermediate of the active site. Residues Arg-134, Glu-171, Lys-287, and Lys-311 each contribute to the NAD(+) site. Zn(2+)-binding residues include Cys-405, Cys-408, Cys-423, and Cys-429. A BRCT domain is found at 588–665; sequence FTNHAFQGKI…NEKEFISLCH (78 aa).

It belongs to the NAD-dependent DNA ligase family. LigA subfamily. The cofactor is Mg(2+). Mn(2+) serves as cofactor.

It catalyses the reaction NAD(+) + (deoxyribonucleotide)n-3'-hydroxyl + 5'-phospho-(deoxyribonucleotide)m = (deoxyribonucleotide)n+m + AMP + beta-nicotinamide D-nucleotide.. In terms of biological role, DNA ligase that catalyzes the formation of phosphodiester linkages between 5'-phosphoryl and 3'-hydroxyl groups in double-stranded DNA using NAD as a coenzyme and as the energy source for the reaction. It is essential for DNA replication and repair of damaged DNA. The chain is DNA ligase from Protochlamydia amoebophila (strain UWE25).